We begin with the raw amino-acid sequence, 183 residues long: uncharacterized protein (183 aa).

Residues 1–182 form the Macro domain; that stretch reads MFRVVHGDIT…VALKVLERDE (182 aa).

This is an uncharacterized protein from Pyrococcus abyssi (strain GE5 / Orsay).